Here is a 28-residue protein sequence, read N- to C-terminus: Grammistin Gs A (28 aa).

This sequence belongs to the grammistin family. Group 3 subfamily. Exists as aggregates of 3-4 molecules. Expressed by the skin glands.

Its subcellular location is the secreted. Functionally, thanks to its amphiphilic alpha-helice(s), it may integrate into membrane phospholipids, leading to lysis of the membrane. Has no substantial hemolytic activity. Has antibacterial activity with a broad spectrum against various species of bacteria including both Gram-positive and Gram-negative groups. The protein is Grammistin Gs A of Grammistes sexlineatus (Goldenstriped soapfish).